The sequence spans 347 residues: Membrane progestin receptor gamma-B (347 aa).

Over 1–52 (MLSLIKLQRVFNVHQVPKAFHEDGIISGYRHPRSSATECVWSLFQLTNETLN) the chain is Cytoplasmic. The helical transmembrane segment at 53–73 (VWTHFLPTWYFLWKLMTVLLM) threads the bilayer. The Extracellular segment spans residues 74-81 (EDVWNEAY). Residues 82-102 (TWPLLVFLFSCCVYPLASSCA) traverse the membrane as a helical segment. Residues 103-114 (HTFSSMSTRARH) are Cytoplasmic-facing. Residues 115–135 (ICYFFDYGALSFYSLGSAISY) form a helical membrane-spanning segment. Residues 136–138 (SAY) lie on the Extracellular side of the membrane. The chain crosses the membrane as a helical span at residues 139 to 159 (VFPDAWLSSSFHAYYISVAVF). Over 160–201 (NTVLSTSLACYSRLGLPLLHYSHDIVERFSERQCPRMSKVLR) the chain is Cytoplasmic. A helical membrane pass occupies residues 202–222 (ILAFAYPYLFDNIPLFYRLFV). Topologically, residues 223 to 235 (CVGEGCTDNEANS) are extracellular. The helical transmembrane segment at 236 to 256 (VHVQHTLLAFLTSFLFATHLP) threads the bilayer. Over 257–314 (ERLAPGRFDYIGHSHQLFHVCAIIGTHFQMKAIEMDMGLRRSQLLASAPAISFNNTIG) the chain is Cytoplasmic. The chain crosses the membrane as a helical span at residues 315–335 (AALLCVSVSLGIICVYSLPLL). At 336-347 (YSSNPKNTANKE) the chain is on the extracellular side.

The protein belongs to the ADIPOR family.

The protein resides in the membrane. Functionally, steroid membrane receptor. Binds progesterone. May be involved in oocyte maturation. The polypeptide is Membrane progestin receptor gamma-B (Danio rerio (Zebrafish)).